A 68-amino-acid polypeptide reads, in one-letter code: ELLQNSGNPCCDPVTCKPRRGEHCVSGPCCDNCKFLNAGTVCWPAMGDWNDDYCTGISSDCPRNPVFK.

The Disintegrin domain occupies glutamate 1 to lysine 68. 4 disulfide bridges follow: cysteine 10–cysteine 33, cysteine 24–cysteine 30, cysteine 29–cysteine 54, and cysteine 42–cysteine 61. The short motif at methionine 46–aspartate 48 is the Cell attachment site; atypical (MGD) element.

The protein belongs to the venom metalloproteinase (M12B) family. P-II subfamily. P-IIe sub-subfamily. As to quaternary structure, heterodimer with EMF10A; disulfide-linked. In terms of tissue distribution, expressed by the venom gland.

It is found in the secreted. Extremely potent and selective inhibitor of integrin alpha-5/beta-1 (ITGA5/ITGB1). Partially inhibits adhesion of cells expressing alpha-IIb/beta-3 (ITGA2B/ITGB3), alpha-V/beta-3 (ITGAV/ITGB3), and alpha-4/beta-1 (ITGA4/ITGB1) to appropriate ligands only at concentration higher than 500 nM. Weakly inhibits ADP-induced platelet aggregation. The sequence is that of Disintegrin EMF10B from Eristicophis macmahoni (Leaf-nosed viper).